Consider the following 160-residue polypeptide: Cyanate hydratase (160 aa).

Active-site residues include arginine 100, glutamate 103, and serine 126.

Belongs to the cyanase family.

It carries out the reaction cyanate + hydrogencarbonate + 3 H(+) = NH4(+) + 2 CO2. Catalyzes the reaction of cyanate with bicarbonate to produce ammonia and carbon dioxide. This Arthroderma otae (strain ATCC MYA-4605 / CBS 113480) (Microsporum canis) protein is Cyanate hydratase.